We begin with the raw amino-acid sequence, 190 residues long: dTTP/UTP pyrophosphatase (190 aa).

Catalysis depends on Asp71, which acts as the Proton acceptor.

The protein belongs to the Maf family. YhdE subfamily. It depends on a divalent metal cation as a cofactor.

The protein resides in the cytoplasm. The enzyme catalyses dTTP + H2O = dTMP + diphosphate + H(+). The catalysed reaction is UTP + H2O = UMP + diphosphate + H(+). Functionally, nucleoside triphosphate pyrophosphatase that hydrolyzes dTTP and UTP. May have a dual role in cell division arrest and in preventing the incorporation of modified nucleotides into cellular nucleic acids. The sequence is that of dTTP/UTP pyrophosphatase from Xanthomonas oryzae pv. oryzae (strain MAFF 311018).